A 403-amino-acid polypeptide reads, in one-letter code: Argininosuccinate synthase (403 aa).

ATP-binding positions include 10–18 (AYSGGVDTS) and Ala-38. Residue Tyr-89 coordinates L-citrulline. Residue Gly-119 coordinates ATP. 3 residues coordinate L-aspartate: Thr-121, Asn-125, and Asp-126. Residue Asn-125 participates in L-citrulline binding. L-citrulline-binding residues include Arg-129, Ser-177, Ser-186, Glu-262, and Tyr-274.

It belongs to the argininosuccinate synthase family. Type 1 subfamily. In terms of assembly, homotetramer.

It localises to the cytoplasm. The catalysed reaction is L-citrulline + L-aspartate + ATP = 2-(N(omega)-L-arginino)succinate + AMP + diphosphate + H(+). It participates in amino-acid biosynthesis; L-arginine biosynthesis; L-arginine from L-ornithine and carbamoyl phosphate: step 2/3. This chain is Argininosuccinate synthase, found in Synechococcus sp. (strain CC9902).